Here is a 774-residue protein sequence, read N- to C-terminus: MTTESKTKTVTHILGYPRVGAQRELKFAQEKYWRGEIEQKELLAVGSELRQRHWKDQSASGLDFVTAGDFAWYDHVLTTSLLLGHVPARHNNGFPDLDTLFKVGRGQSQNSCGCGEAASDMTKWFNTNYHYIVPEFSKNDKFNVSWSQLFDEIAEAQKQGHNVKPVLLGPLSYLWLGKEVNDEEVEQGFDRLSLLPRLLTAYQAIFSKLSALGVEWVQIDEPILALELPKAWADSFKLAYQVIQSDVKLLLTTYFDGVEHHLDKITKLAVNGLHIDVSAAPDQLDAIVSALPKEWVLSVGAVNGRNVWRADLERLHERLQPVKEALGDKLWIASSCSLLHSPVDLDQETELSKETLQWFAFAKQKLREVTLLADALDGNQNAILACHQYSQPLRERESAEHINKPAVQQRLAAITPALAERAEAYSVRAQHQAEKLGLPLLPTTTIGSFPQTSDIRQQRSAYRTGKLNEQDYVTAMKGHIADAVERQERLDLDVLVHGEAERNDMVEYFAENLNGFQATRFGWVQSYGSRCVKPAIVVADIEREAPITVSWTQYAQSLTTKQMKGMLTGPVTILGWTFPREDITRKEIAQQLALVLRDEVSDLQQAGINIIQIDEPAIREGLPIKKSDQKAYLDWAVEAFKISAASAKSETQIHTHMCYSEFNEIIESVAALDADVITIETSRSNMELLKAFEDFNYPNEIGPGVYDIHSPNIPSQEWIVDLIETAAARVPVERLWVNPDCGLKTRNWKETEAALENMVKAAKALRKKWQSNAA.

5-methyltetrahydropteroyltri-L-glutamate contacts are provided by residues 23–26 and Lys-123; that span reads RELK. Residues 446–448 and Glu-499 each bind L-homocysteine; that span reads IGS. L-methionine contacts are provided by residues 446–448 and Glu-499; that span reads IGS. 5-methyltetrahydropteroyltri-L-glutamate is bound by residues 530-531 and Trp-576; that span reads RC. L-homocysteine is bound at residue Asp-614. Position 614 (Asp-614) interacts with L-methionine. Glu-620 serves as a coordination point for 5-methyltetrahydropteroyltri-L-glutamate. His-656, Cys-658, and Glu-680 together coordinate Zn(2+). The Proton donor role is filled by His-709. A Zn(2+)-binding site is contributed by Cys-741.

It belongs to the vitamin-B12 independent methionine synthase family. The cofactor is Zn(2+).

The enzyme catalyses 5-methyltetrahydropteroyltri-L-glutamate + L-homocysteine = tetrahydropteroyltri-L-glutamate + L-methionine. The protein operates within amino-acid biosynthesis; L-methionine biosynthesis via de novo pathway; L-methionine from L-homocysteine (MetE route): step 1/1. In terms of biological role, catalyzes the transfer of a methyl group from 5-methyltetrahydrofolate to homocysteine resulting in methionine formation. This chain is 5-methyltetrahydropteroyltriglutamate--homocysteine methyltransferase, found in Aliivibrio fischeri (strain ATCC 700601 / ES114) (Vibrio fischeri).